Reading from the N-terminus, the 405-residue chain is Serpin I2 (405 aa).

The signal sequence occupies residues 1 to 18 (MNKTILWSFLLFFSGSQT). An N-linked (GlcNAc...) asparagine glycan is attached at Asn-306.

The protein belongs to the serpin family. Expressed in pancreas.

Its subcellular location is the secreted. The chain is Serpin I2 (Serpini2) from Mus musculus (Mouse).